The sequence spans 408 residues: Argininosuccinate synthase (408 aa).

ATP contacts are provided by residues 12–20 and alanine 39; that span reads AYSGGLDTS. Positions 90 and 95 each coordinate L-citrulline. ATP is bound at residue glycine 120. Residues threonine 122, asparagine 126, and aspartate 127 each contribute to the L-aspartate site. Asparagine 126 lines the L-citrulline pocket. L-citrulline-binding residues include arginine 130, serine 181, serine 190, glutamate 266, and tyrosine 278.

The protein belongs to the argininosuccinate synthase family. Type 1 subfamily. Homotetramer.

It localises to the cytoplasm. The enzyme catalyses L-citrulline + L-aspartate + ATP = 2-(N(omega)-L-arginino)succinate + AMP + diphosphate + H(+). It participates in amino-acid biosynthesis; L-arginine biosynthesis; L-arginine from L-ornithine and carbamoyl phosphate: step 2/3. The protein is Argininosuccinate synthase of Methylococcus capsulatus (strain ATCC 33009 / NCIMB 11132 / Bath).